The following is a 420-amino-acid chain: Serine--tRNA ligase (420 aa).

An L-serine-binding site is contributed by Thr-228 to Glu-230. Arg-259–Glu-261 lines the ATP pocket. Glu-282 is an L-serine binding site. An ATP-binding site is contributed by Glu-346–Ser-349. Ser-382 serves as a coordination point for L-serine.

The protein belongs to the class-II aminoacyl-tRNA synthetase family. Type-1 seryl-tRNA synthetase subfamily. Homodimer. The tRNA molecule binds across the dimer.

It is found in the cytoplasm. It catalyses the reaction tRNA(Ser) + L-serine + ATP = L-seryl-tRNA(Ser) + AMP + diphosphate + H(+). The catalysed reaction is tRNA(Sec) + L-serine + ATP = L-seryl-tRNA(Sec) + AMP + diphosphate + H(+). It participates in aminoacyl-tRNA biosynthesis; selenocysteinyl-tRNA(Sec) biosynthesis; L-seryl-tRNA(Sec) from L-serine and tRNA(Sec): step 1/1. Its function is as follows. Catalyzes the attachment of serine to tRNA(Ser). Is also able to aminoacylate tRNA(Sec) with serine, to form the misacylated tRNA L-seryl-tRNA(Sec), which will be further converted into selenocysteinyl-tRNA(Sec). The polypeptide is Serine--tRNA ligase (Mycoplasmoides gallisepticum (strain R(low / passage 15 / clone 2)) (Mycoplasma gallisepticum)).